The chain runs to 142 residues: Ribosome maturation factor RimP (142 aa).

The protein belongs to the RimP family.

Its subcellular location is the cytoplasm. Required for maturation of 30S ribosomal subunits. The chain is Ribosome maturation factor RimP from Aromatoleum aromaticum (strain DSM 19018 / LMG 30748 / EbN1) (Azoarcus sp. (strain EbN1)).